The chain runs to 254 residues: Putative biopolymer transport protein ExbB-like 1 (254 aa).

The next 3 membrane-spanning stretches (helical) occupy residues 39–59 (GGVVMFPLLLLSILALTTAFE), 141–161 (LETIIALAPLLGLLGTVTGLI), and 185–205 (IGEALITTAAGMMVAIFALLV).

It belongs to the ExbB/TolQ family.

It localises to the cell inner membrane. In terms of biological role, involved in the TonB-dependent energy-dependent transport of various receptor-bound substrates. Protects ExbD from proteolytic degradation and functionally stabilizes TonB. The polypeptide is Putative biopolymer transport protein ExbB-like 1 (Synechocystis sp. (strain ATCC 27184 / PCC 6803 / Kazusa)).